The primary structure comprises 191 residues: Ribonuclease MC (191 aa).

Residue Gln-9 participates in RNA binding. A disulfide bridge connects residues Cys-15 and Cys-23. RNA contacts are provided by residues His-34, 72–73 (NV), Arg-75, Phe-81, 84–85 (HE), and 88–89 (KH). The Proton donor role is filled by His-34. 3 cysteine pairs are disulfide-bonded: Cys-48/Cys-92, Cys-152/Cys-185, and Cys-169/Cys-180. The active site involves Glu-85. The Proton acceptor role is filled by His-89.

It belongs to the RNase T2 family.

The enzyme catalyses a ribonucleotidyl-ribonucleotide-RNA + H2O = a 3'-end 3'-phospho-ribonucleotide-RNA + a 5'-end dephospho-ribonucleoside-RNA + H(+). In terms of biological role, ribonuclease cleaving preferentially the 5'-side of uridine. This Momordica charantia (Bitter gourd) protein is Ribonuclease MC.